A 206-amino-acid chain; its full sequence is Small ribosomal subunit protein uS4 (206 aa).

The region spanning 96 to 156 (GRLDNVVYRM…EKAKKQARIK (61 aa)) is the S4 RNA-binding domain.

It belongs to the universal ribosomal protein uS4 family. In terms of assembly, part of the 30S ribosomal subunit. Contacts protein S5. The interaction surface between S4 and S5 is involved in control of translational fidelity.

Its function is as follows. One of the primary rRNA binding proteins, it binds directly to 16S rRNA where it nucleates assembly of the body of the 30S subunit. Functionally, with S5 and S12 plays an important role in translational accuracy. This is Small ribosomal subunit protein uS4 from Aeromonas salmonicida (strain A449).